The primary structure comprises 154 residues: 6,7-dimethyl-8-ribityllumazine synthase (154 aa).

5-amino-6-(D-ribitylamino)uracil is bound by residues F22, A56 to E58, and A80 to I82. A (2S)-2-hydroxy-3-oxobutyl phosphate-binding site is contributed by A85 to T86. H88 acts as the Proton donor in catalysis. F113 provides a ligand contact to 5-amino-6-(D-ribitylamino)uracil. R127 contacts (2S)-2-hydroxy-3-oxobutyl phosphate.

The protein belongs to the DMRL synthase family.

It carries out the reaction (2S)-2-hydroxy-3-oxobutyl phosphate + 5-amino-6-(D-ribitylamino)uracil = 6,7-dimethyl-8-(1-D-ribityl)lumazine + phosphate + 2 H2O + H(+). The protein operates within cofactor biosynthesis; riboflavin biosynthesis; riboflavin from 2-hydroxy-3-oxobutyl phosphate and 5-amino-6-(D-ribitylamino)uracil: step 1/2. Catalyzes the formation of 6,7-dimethyl-8-ribityllumazine by condensation of 5-amino-6-(D-ribitylamino)uracil with 3,4-dihydroxy-2-butanone 4-phosphate. This is the penultimate step in the biosynthesis of riboflavin. In Desulfitobacterium hafniense (strain DSM 10664 / DCB-2), this protein is 6,7-dimethyl-8-ribityllumazine synthase.